We begin with the raw amino-acid sequence, 367 residues long: Germination protease (367 aa).

Residues 1–15 constitute a propeptide that is removed on maturation; it reads MKEPLDLSKYSVRTD.

The protein belongs to the peptidase A25 family. In terms of assembly, homotetramer. Post-translationally, autoproteolytically processed. The inactive tetrameric zymogen termed p46 autoprocesses to a smaller form termed p41, which is active only during spore germination.

The enzyme catalyses Endopeptidase action with P4 Glu or Asp, P1 preferably Glu &gt; Asp, P1' hydrophobic and P2' Ala.. In terms of biological role, initiates the rapid degradation of small, acid-soluble proteins during spore germination. This chain is Germination protease, found in Bacillus cereus (strain AH187).